Here is a 172-residue protein sequence, read N- to C-terminus: CD-NTase-associated protein 7 (172 aa).

The segment at 141–172 (AQSPGINGYLENDKTYSAGGRSLTRTSVRNFV) is required for binding to CdnC and to confer phage immunity.

Belongs to the bacterial HORMA family. HORMA1 subfamily. In terms of assembly, forms complexes with CdnC with 1:1 and 2:2 stoichimetry, and a 1:1:6 CdnC:Cap7:Cap6 complex.

Functionally, sensor protein of a CBASS antivirus system. CBASS (cyclic oligonucleotide-based antiphage signaling system) provides immunity against bacteriophage. The CD-NTase protein synthesizes cyclic nucleotides in response to infection; these serve as specific second messenger signals. The signals activate a diverse range of effectors, leading to bacterial cell death and thus abortive phage infection. A type III-C(AAA) CBASS system. In terms of biological role, binds to a closure peptide (consensus His-Xaa-Xaa-Ile-Leu-Leu-Thr), which allows it to activate CdnC for second messenger synthesis. Its function is as follows. Protects E.coli strain JP313 against bacteriophage lambda cI- infection. When the cdnC-cap7-cap6-nucC operon is transformed into a susceptible strain it confers bacteriophage immunity. Mutations in the sensor (Cap7 also called HORMA) or effector proteins (CdnC, NucC) but not the disassembly protein (Cap6 also called Trip13) no longer confer immunity. The presence of the intact operon leads to culture collapse and cell death, which occurs before the phage has finished its replication cycle, thus protecting non-infected bacteria by aborting the phage infection and preventing its propagation. The protein is CD-NTase-associated protein 7 of Escherichia coli (strain MS 115-1).